A 570-amino-acid polypeptide reads, in one-letter code: Sulfite reductase [NADPH] hemoprotein beta-component (570 aa).

4 residues coordinate [4Fe-4S] cluster: Cys-434, Cys-440, Cys-479, and Cys-483. Cys-483 is a binding site for siroheme.

This sequence belongs to the nitrite and sulfite reductase 4Fe-4S domain family. As to quaternary structure, alpha(8)-beta(8). The alpha component is a flavoprotein, the beta component is a hemoprotein. It depends on siroheme as a cofactor. [4Fe-4S] cluster is required as a cofactor.

The enzyme catalyses hydrogen sulfide + 3 NADP(+) + 3 H2O = sulfite + 3 NADPH + 4 H(+). Its pathway is sulfur metabolism; hydrogen sulfide biosynthesis; hydrogen sulfide from sulfite (NADPH route): step 1/1. Component of the sulfite reductase complex that catalyzes the 6-electron reduction of sulfite to sulfide. This is one of several activities required for the biosynthesis of L-cysteine from sulfate. The polypeptide is Sulfite reductase [NADPH] hemoprotein beta-component (Salmonella schwarzengrund (strain CVM19633)).